A 942-amino-acid chain; its full sequence is Protein inturned (942 aa).

2 disordered regions span residues 1–56 and 128–156; these read MAGL…PEWL and LPRRHHKKSSSNNGPVSILKHQSSQKTGV. Acidic residues predominate over residues 22-32; that stretch reads SQEEEEEEGDS. Over residues 33–48 the composition is skewed to low complexity; the sequence is DAGASSLGSYSSASSD. Over residues 137-156 the composition is skewed to polar residues; the sequence is SSNNGPVSILKHQSSQKTGV. Residues 185 to 267 form the PDZ domain; it reads LLEVLVGIIH…PMQVKLTFEN (83 aa). Residues serine 674 and serine 678 each carry the phosphoserine modification. The segment at 707–751 is disordered; it reads KARKPSPSRIGGGREPTEGEESAGLSPHATPDAVRKQRESEGSDD.

This sequence belongs to the inturned family. In terms of assembly, component of the CPLANE (ciliogenesis and planar polarity effectors) complex, composed of INTU, FUZ and WDPCP. Interacts with CPLANE1. Interacts with NPHP4 and DAAM1; INTU is mediating the interaction between NPHP4 and DAAM1. Widely expressed in E8.5 and E9.5 wild type embryos. Present in various adult organs (at protein level).

Its subcellular location is the cytoplasm. The protein localises to the cell surface. It is found in the cytoskeleton. It localises to the cilium basal body. The protein resides in the microtubule organizing center. Its subcellular location is the centrosome. The protein localises to the centriole. In terms of biological role, plays a key role in ciliogenesis and embryonic development. Regulator of cilia formation by controlling the organization of the apical actin cytoskeleton and the positioning of the basal bodies at the apical cell surface, which in turn is essential for the normal orientation of elongating ciliary microtubules. Plays a key role in definition of cell polarity via its role in ciliogenesis but not via conversion extension. Has an indirect effect on hedgehog signaling. Proposed to function as core component of the CPLANE (ciliogenesis and planar polarity effectors) complex involved in the recruitment of peripheral IFT-A proteins to basal bodies. Required for recruitment of CPLANE2 to the mother centriole. Binds phosphatidylinositol 3-phosphate with highest affinity, followed by phosphatidylinositol 4-phosphate and phosphatidylinositol 5-phosphate. The polypeptide is Protein inturned (Intu) (Mus musculus (Mouse)).